Reading from the N-terminus, the 276-residue chain is 2-dehydro-3-deoxyphosphooctonate aldolase (276 aa).

Belongs to the KdsA family.

The protein resides in the cytoplasm. It carries out the reaction D-arabinose 5-phosphate + phosphoenolpyruvate + H2O = 3-deoxy-alpha-D-manno-2-octulosonate-8-phosphate + phosphate. It participates in carbohydrate biosynthesis; 3-deoxy-D-manno-octulosonate biosynthesis; 3-deoxy-D-manno-octulosonate from D-ribulose 5-phosphate: step 2/3. Its pathway is bacterial outer membrane biogenesis; lipopolysaccharide biosynthesis. The polypeptide is 2-dehydro-3-deoxyphosphooctonate aldolase (Xanthomonas axonopodis pv. citri (strain 306)).